We begin with the raw amino-acid sequence, 432 residues long: FMRFamide peptide receptor frpr-18 (432 aa).

Residues 1 to 8 are Extracellular-facing; the sequence is MESQQLMA. Residues 9–29 form a helical membrane-spanning segment; the sequence is CAILVIVLVGIFGNSLSFILF. Residues 30-42 lie on the Cytoplasmic side of the membrane; that stretch reads SRPHMRSSSVNVL. The chain crosses the membrane as a helical span at residues 43–63; the sequence is LCALSFFDFSLLTLSIPIFVI. At 64-84 the chain is on the extracellular side; sequence PNLDLWANDLSLSTYMAYILK. Residues 85–105 traverse the membrane as a helical segment; the sequence is LIYPINLMMQTCSVYIMVMIT. Over 106–128 the chain is Cytoplasmic; that stretch reads LERWVAVCRPLQVRVWCTPRKSR. The chain crosses the membrane as a helical span at residues 129 to 149; the sequence is NAILVIIVSAFLYNFVRFFEY. Over 150–176 the chain is Extracellular; it reads RFVVTESGALYEKWLRDPGKHRWYYVG. Residues 177–197 form a helical membrane-spanning segment; the sequence is YYTILYIVTHFLVPFSVMAFA. Topologically, residues 198–225 are cytoplasmic; that stretch reads NGHVIVAMCKLSKTRQMLTRQQQREQST. A helical membrane pass occupies residues 226–246; that stretch reads TVMLLIVTFVFAICNTLPFLL. Over 247–271 the chain is Extracellular; it reads NVSESIFPTLFQDESTRGLAYWLND. A helical membrane pass occupies residues 272–292; the sequence is LSNLLVVLNSGTTFIIYFTFS. Residues 293–432 lie on the Cytoplasmic side of the membrane; it reads EKYRQTLVFI…GEPDSPCQPC (140 aa). 2 disordered regions span residues 328–349 and 388–411; these read ISSE…SSRS and KLPS…GMPE.

This sequence belongs to the G-protein coupled receptor 1 family. In terms of tissue distribution, expressed in a subset of neurons in the head, midbody, and tail, including AIY, ASI, BAG, URA, CAN, I6, PVQ, DVA, RIM, and VC, and in the anal sphincter and intestinal muscles. Expression from the ASI neurons is involved in promoting arousal.

Its subcellular location is the cell membrane. G-protein coupled receptor for flp-2 neuropeptides. May act through the G(q) alpha type of G proteins. Involved in mediating arousal from the sleep-like state called lethargus, which occurs during molting between larval and adult stages, in part by regulating touch sensitivity, and working in concert with neuropeptide pdf-1. This is FMRFamide peptide receptor frpr-18 from Caenorhabditis elegans.